The following is a 24-amino-acid chain: U4-ctenitoxin-Co1b (24 aa).

Disulfide bonds are present. Expressed by the venom gland.

It is found in the secreted. Omega-agatoxins are antagonists of voltage-gated calcium channels (Cav). In Ctenus ornatus (Brazilian spider), this protein is U4-ctenitoxin-Co1b.